A 429-amino-acid polypeptide reads, in one-letter code: MANVVVVGTQWGDEGKGKIVDWLSEQADVVVRYQGGHNAGHTLVINGISYKLSLLPSGVVRGKLSVIGNGVVVDPHHFVSELKKLRDQGVEITPKVLRVAENASLILSVHRDLDAARENGISGLTIGTTKRGIGPAYEDKVGRRSIRMIDLAETNTLMAKIERLLRHHNALRRGMGIAEIDPKTLYDELMQVADEILPFMDCTWRLLDERHRMGQRILFEGAQGASLDNDFGTYPYVTSSNTVSGQAFIGSGMGPGSVHYVLGIAKAYTTRVGEGPFPTEQVNDVGEFLGMRGNEFGVVTGRKRRCGWFDAVLVRQMVKICSVRGIALTKLDVLDGLDEIKICIGYEIDGRKIDYLPSCIEEQARVKPIYETLEGWKEATACTLNWEELPVQAIKYVRRIEELIGVPIALLSTSPEREDTIFIIDPFAD.

Residues 12-18 (GDEGKGK) and 40-42 (GHT) contribute to the GTP site. Residue D13 is the Proton acceptor of the active site. Mg(2+) contacts are provided by D13 and G40. Residues 13–16 (DEGK), 38–41 (NAGH), T129, R143, Q223, T238, and R302 each bind IMP. H41 functions as the Proton donor in the catalytic mechanism. 298-304 (VVTGRKR) contacts substrate. Residues R304, 330–332 (KLD), and 412–414 (STS) each bind GTP.

The protein belongs to the adenylosuccinate synthetase family. As to quaternary structure, homodimer. Mg(2+) is required as a cofactor.

It localises to the cytoplasm. It carries out the reaction IMP + L-aspartate + GTP = N(6)-(1,2-dicarboxyethyl)-AMP + GDP + phosphate + 2 H(+). The protein operates within purine metabolism; AMP biosynthesis via de novo pathway; AMP from IMP: step 1/2. Its function is as follows. Plays an important role in the de novo pathway of purine nucleotide biosynthesis. Catalyzes the first committed step in the biosynthesis of AMP from IMP. This Bartonella bacilliformis (strain ATCC 35685 / KC583 / Herrer 020/F12,63) protein is Adenylosuccinate synthetase.